The following is a 146-amino-acid chain: Inclusion membrane protein D (146 aa).

A run of 2 helical transmembrane segments spans residues 38-58 (AAVA…GLLF) and 68-88 (VVAA…ALVG).

Its subcellular location is the secreted. It is found in the host vacuole. The protein resides in the host pathogen-containing vacuole. It localises to the host pathogen-containing vacuole membrane. In terms of biological role, host inclusion membrane protein probably involved in early modification events of the chlamydial inclusion. The polypeptide is Inclusion membrane protein D (Chlamydia trachomatis serovar L2 (strain ATCC VR-902B / DSM 19102 / 434/Bu)).